The following is a 1026-amino-acid chain: Phosphoenolpyruvate carboxylase (1026 aa).

Catalysis depends on residues His199 and Lys672.

It belongs to the PEPCase type 1 family. Requires Mg(2+) as cofactor.

The catalysed reaction is oxaloacetate + phosphate = phosphoenolpyruvate + hydrogencarbonate. Its function is as follows. Forms oxaloacetate, a four-carbon dicarboxylic acid source for the tricarboxylic acid cycle. The polypeptide is Phosphoenolpyruvate carboxylase (ppc) (Nostoc sp. (strain PCC 7120 / SAG 25.82 / UTEX 2576)).